The following is a 147-amino-acid chain: Hemoglobin subunit gamma (147 aa).

The Globin domain maps to 3 to 147 (NFTAEDKAAI…VASALGSRYH (145 aa)). Heme b is bound by residues histidine 64 and histidine 93.

It belongs to the globin family. In terms of assembly, heterotetramer of two alpha chains and two gamma chains in fetal hemoglobin (Hb F). Red blood cells.

Gamma chains make up the fetal hemoglobin F, in combination with alpha chains. The polypeptide is Hemoglobin subunit gamma (HBG) (Aotus azarae (Azara's night monkey)).